The chain runs to 472 residues: Probable serine/threonine-protein kinase At1g01540 (472 aa).

The helical transmembrane segment at 24–44 (LWVVIGILLGSLIVIALFLLS) threads the bilayer. Phosphothreonine is present on residues threonine 67 and threonine 143. The region spanning 154–431 (LCEENVIGEG…IHMLEAEDLL (278 aa)) is the Protein kinase domain. ATP is bound by residues 160-168 (IGEGGYGIV) and lysine 182. Tyrosine 227 is subject to Phosphotyrosine. Aspartate 280 serves as the catalytic Proton acceptor. Serine 284 bears the Phosphoserine mark. Phosphothreonine is present on residues threonine 314 and threonine 319. Tyrosine 327 carries the post-translational modification Phosphotyrosine. A compositionally biased stretch (basic and acidic residues) spans 437-449 (RTTRDHGSRERQE). The segment at 437 to 472 (RTTRDHGSRERQETAVVAAGSESGESGSRHHQQKQR) is disordered. Positions 451 to 462 (AVVAAGSESGES) are enriched in low complexity.

The protein belongs to the protein kinase superfamily. Ser/Thr protein kinase family.

The protein localises to the membrane. The catalysed reaction is L-seryl-[protein] + ATP = O-phospho-L-seryl-[protein] + ADP + H(+). It catalyses the reaction L-threonyl-[protein] + ATP = O-phospho-L-threonyl-[protein] + ADP + H(+). The polypeptide is Probable serine/threonine-protein kinase At1g01540 (Arabidopsis thaliana (Mouse-ear cress)).